The sequence spans 1735 residues: Glutamine and serine-rich protein 1 (1735 aa).

Methionine 1 carries the post-translational modification N-acetylmethionine. The span at 267–297 (AIPSSGYPPSTTKIKSCSTEQPLTSTKTPKP) shows a compositional bias: polar residues. Disordered stretches follow at residues 267–301 (AIPSSGYPPSTTKIKSCSTEQPLTSTKTPKPQSII), 414–440 (TRDLSSVSQSQSYSSGHSQGLSPVSQT), 479–518 (SRAQNLPDSSPTQNYISMHSSQNVQTQESSSPQSQKFLPA), and 533–561 (LQNNITSPDPKSYAERKLDSDVYPSSKQE). The span at 417-440 (LSSVSQSQSYSSGHSQGLSPVSQT) shows a compositional bias: low complexity. Residues serine 586, serine 615, and serine 886 each carry the phosphoserine modification. Threonine 949 bears the Phosphothreonine mark. Residues 964–1033 (GPSHEVQEQS…EFTLGGDDSG (70 aa)) form a disordered region. Residues 971 to 985 (EQSSGPFKKQSATNL) are compositionally biased toward polar residues. Serine 987 is subject to Phosphoserine. Positions 997–1024 (STLNNNRNQEFVSSSRSISGENATSESE) are enriched in polar residues. Residues lysine 1058 and lysine 1083 each participate in a glycyl lysine isopeptide (Lys-Gly) (interchain with G-Cter in SUMO2) cross-link. Disordered stretches follow at residues 1073–1132 (KKRA…EKMR) and 1178–1217 (RPGTQMVRTFCPPPLPKPSSTTPTPLVSETGGNSPSDKVD). Positions 1120-1132 (SCHDGYQHQEKMR) are enriched in basic and acidic residues. Phosphoserine occurs at positions 1211, 1230, 1231, and 1239. The disordered stretch occupies residues 1256–1286 (TSDKKKKTEALQVATTSPTANTTGTATTSST). The span at 1269-1286 (ATTSPTANTTGTATTSST) shows a compositional bias: low complexity. The residue at position 1341 (threonine 1341) is a Phosphothreonine. Position 1348 is a phosphoserine (serine 1348). The disordered stretch occupies residues 1441 to 1532 (VCSKKPRNKP…SSDDEEFEPP (92 aa)). The segment covering 1449-1478 (KPSQTIRTVQAKPSSSSKTSDPLASKTTTT) has biased composition (polar residues). Basic and acidic residues predominate over residues 1492–1508 (VKAEPPPKKRKKWKEEF).

As to quaternary structure, interacts with TET1.

The protein localises to the chromosome. Functionally, plays an essential role in the protection and maintenance of transcriptional and developmental programs. Protects many bivalent promoters and poised enhancers from hypermethylation, showing a marked preference for these regulatory elements over other types of promoters or enhancers. Mechanistically, cooperates with TET1 and binds to DNA in a common complex to inhibit the binding of DNMT3A/3B and therefore de novo methylation. The protein is Glutamine and serine-rich protein 1 (QSER1) of Homo sapiens (Human).